A 155-amino-acid chain; its full sequence is D-aminoacyl-tRNA deacylase (155 aa).

A Gly-cisPro motif, important for rejection of L-amino acids motif is present at residues 137-138 (GP).

The protein belongs to the DTD family. Homodimer.

The protein resides in the cytoplasm. The catalysed reaction is glycyl-tRNA(Ala) + H2O = tRNA(Ala) + glycine + H(+). It carries out the reaction a D-aminoacyl-tRNA + H2O = a tRNA + a D-alpha-amino acid + H(+). In terms of biological role, an aminoacyl-tRNA editing enzyme that deacylates mischarged D-aminoacyl-tRNAs. Also deacylates mischarged glycyl-tRNA(Ala), protecting cells against glycine mischarging by AlaRS. Acts via tRNA-based rather than protein-based catalysis; rejects L-amino acids rather than detecting D-amino acids in the active site. By recycling D-aminoacyl-tRNA to D-amino acids and free tRNA molecules, this enzyme counteracts the toxicity associated with the formation of D-aminoacyl-tRNA entities in vivo and helps enforce protein L-homochirality. This chain is D-aminoacyl-tRNA deacylase, found in Geotalea uraniireducens (strain Rf4) (Geobacter uraniireducens).